A 480-amino-acid polypeptide reads, in one-letter code: 2-phosphoxylose phosphatase 1 (480 aa).

At 1-6 (MLHRNR) the chain is on the cytoplasmic side. Residues 7–27 (FLVLLALAGLLAFLSLSLQFF) traverse the membrane as a helical; Signal-anchor for type II membrane protein segment. Residues 28–480 (HLIPVSATKN…YYDACHGEGA (453 aa)) lie on the Lumenal side of the membrane. The Nucleophile role is filled by His97. 3 N-linked (GlcNAc...) asparagine glycosylation sites follow: Asn194, Asn305, and Asn354. Residue Asp379 is the Proton donor of the active site.

It belongs to the histidine acid phosphatase family. In terms of assembly, interacts with B3GAT3; the interaction increases the 2-phosphoxylose phosphatase activity of PXYLP1 during completion of linkage region formation in a B3GAT3-mediated manner.

It localises to the golgi apparatus membrane. The enzyme catalyses 3-O-[beta-D-GlcA-(1-&gt;3)-beta-D-Gal-(1-&gt;3)-beta-D-Gal-(1-&gt;4)-beta-D-2-O-P-Xyl]-L-seryl-[protein] + H2O = 3-O-(beta-D-GlcA-(1-&gt;3)-beta-D-Gal-(1-&gt;3)-beta-D-Gal-(1-&gt;4)-beta-D-Xyl)-L-seryl-[protein] + phosphate. Functionally, responsible for the 2-O-dephosphorylation of xylose in the glycosaminoglycan-protein linkage region of proteoglycans thereby regulating the amount of mature glycosaminoglycan (GAG) chains. Sulfated glycosaminoglycans (GAGs), including heparan sulfate and chondroitin sulfate, are synthesized on the so-called common GAG-protein linkage region (GlcUAbeta1-3Galbeta1-3Galbeta1-4Xylbeta1-O-Ser) of core proteins, which is formed by the stepwise addition of monosaccharide residues by the respective specific glycosyltransferases. Xylose 2-O-dephosphorylation during completion of linkage region formation is a prerequisite for the initiation and efficient elongation of the repeating disaccharide region of GAG chains. In Mus musculus (Mouse), this protein is 2-phosphoxylose phosphatase 1.